A 456-amino-acid polypeptide reads, in one-letter code: Yersinopine synthase (456 aa).

Residues 12–15, 35–40, and T154 each bind NADP(+); these read AGPA and NRPSTK. Catalysis depends on H242, which acts as the Proton donor/acceptor.

This sequence belongs to the staphylopine dehydrogenase family. Homodimer.

It carries out the reaction yersinopine + NADP(+) + H2O = (2S)-2-amino-4-{[(1S)-1-carboxy-2-(1H-imidazol-4-yl)ethyl]amino}butanoate + pyruvate + NADPH + H(+). Functionally, catalyzes the NADPH-dependent reductive condensation of pyruvate to the intermediate formed by the adjacently encoded enzyme y2836, namely (2S)-2-amino-4-{[(1S)-1-carboxy-2-(1H-imidazol-4-yl)ethyl]amino}butanoate, leading to the production of yersinopine. This is the last step in the biosynthesis of the metallophore yersinopine, which is involved in metal acquisition and thus enables bacterial growth inside the host, where metal access is limited. Therefore, this enzyme probably contributes to Yersinia virulence. Cannot use alpha-ketoglutarate in place of pyruvate, and displays only poor efficiency with oxaloacetate and glyoxylate. The sequence is that of Yersinopine synthase from Yersinia pestis.